A 589-amino-acid polypeptide reads, in one-letter code: MELNTMGKNHYKWSNKQLREHVEVLDGKRSTHILLKNATYLNSYMREWMTANIWIYNDRIVYVGEQLPEQLTECEVVDCEGKYVVPGYIEPHAHPYQLYNPETLANHAMQFGTTTFINDNLTLFFTLKREEAFRLLDEFNKIPASMYWWCRFDGQTELQNGESLFNSEEIIEWLQHEAVLQGGELTAWPKLLHGDDEMLTWVQETKRLQKKVEGHFPGASETTLAKLKLLGTDCDHEAMTGQEAFTRLMQGYTVSLRNSSIRPDLEVILKELLELGVKQFDRFFFTTDGSHPSFYENGMTNVMISTAIKQGVPVIDAYDMASYNIARYYNMEHVHGSIATGRIANINILESKENPVPISVLAKGKWVKRDGVNTHEALHIDWSKHKVTPLSLDWSIEKEDMIFSNKTGIHLLNNVITKPYTSEINIDCDELSTDHDECFFMMIARDGSWQVNIAVKGFAKELGGLASSYSGTGDIILIGKRKEDMLTAFRRVKELGGGMVIAEKNEVLHEIALPLLGIMSNLKMRELIQEEKQMVKLLQERGYAHDDPAFTILFFSATHLPFIRVTPIGLYDVKSSKVVAPPVNLIKQY.

This sequence belongs to the metallo-dependent hydrolases superfamily. Adenine deaminase family.

It carries out the reaction adenine + H2O + H(+) = hypoxanthine + NH4(+). This is Putative adenine deaminase BC_3012 from Bacillus cereus (strain ATCC 14579 / DSM 31 / CCUG 7414 / JCM 2152 / NBRC 15305 / NCIMB 9373 / NCTC 2599 / NRRL B-3711).